We begin with the raw amino-acid sequence, 481 residues long: Probable glycine dehydrogenase (decarboxylating) subunit 2 (481 aa).

An N6-(pyridoxal phosphate)lysine modification is found at K265.

The protein belongs to the GcvP family. C-terminal subunit subfamily. In terms of assembly, the glycine cleavage system is composed of four proteins: P, T, L and H. In this organism, the P 'protein' is a heterodimer of two subunits. It depends on pyridoxal 5'-phosphate as a cofactor.

It catalyses the reaction N(6)-[(R)-lipoyl]-L-lysyl-[glycine-cleavage complex H protein] + glycine + H(+) = N(6)-[(R)-S(8)-aminomethyldihydrolipoyl]-L-lysyl-[glycine-cleavage complex H protein] + CO2. Functionally, the glycine cleavage system catalyzes the degradation of glycine. The P protein binds the alpha-amino group of glycine through its pyridoxal phosphate cofactor; CO(2) is released and the remaining methylamine moiety is then transferred to the lipoamide cofactor of the H protein. This Thermosipho melanesiensis (strain DSM 12029 / CIP 104789 / BI429) protein is Probable glycine dehydrogenase (decarboxylating) subunit 2.